The primary structure comprises 969 residues: RNA polymerase-associated protein RapA (969 aa).

In terms of domain architecture, Helicase ATP-binding spans 164–334 (EVGRRHAPRV…FARLRLLDSD (171 aa)). 177-184 (DEVGLGKT) contributes to the ATP binding site. A DEAH box motif is present at residues 280 to 283 (DEAH). Residues 492–668 (RVNWLLEKLK…GSNEALNDVI (177 aa)) enclose the Helicase C-terminal domain.

Belongs to the SNF2/RAD54 helicase family. RapA subfamily. In terms of assembly, interacts with the RNAP. Has a higher affinity for the core RNAP than for the holoenzyme. Its ATPase activity is stimulated by binding to RNAP.

In terms of biological role, transcription regulator that activates transcription by stimulating RNA polymerase (RNAP) recycling in case of stress conditions such as supercoiled DNA or high salt concentrations. Probably acts by releasing the RNAP, when it is trapped or immobilized on tightly supercoiled DNA. Does not activate transcription on linear DNA. Probably not involved in DNA repair. The sequence is that of RNA polymerase-associated protein RapA from Vibrio vulnificus (strain YJ016).